Consider the following 656-residue polypeptide: Translation factor GUF1, mitochondrial (656 aa).

The transit peptide at 1-28 directs the protein to the mitochondrion; sequence MWKGLLQSTRAAWRGPCVRAPRLPFFRR. The region spanning 55–235 is the tr-type G domain; that stretch reads ERYRNFSIVA…NVIENIPGPD (181 aa). GTP-binding positions include 64-71, 128-132, and 182-185; these read AHVDHGKS, DTPGH, and NKID.

The protein belongs to the TRAFAC class translation factor GTPase superfamily. Classic translation factor GTPase family. LepA subfamily.

It is found in the mitochondrion inner membrane. It carries out the reaction GTP + H2O = GDP + phosphate + H(+). Functionally, promotes mitochondrial protein synthesis. May act as a fidelity factor of the translation reaction, by catalyzing a one-codon backward translocation of tRNAs on improperly translocated ribosomes. Binds to mitochondrial ribosomes in a GTP-dependent manner. The chain is Translation factor GUF1, mitochondrial from Yarrowia lipolytica (strain CLIB 122 / E 150) (Yeast).